A 418-amino-acid chain; its full sequence is Gene 68 protein (418 aa).

Disordered stretches follow at residues 230–304 (IPAP…IHTL) and 353–418 (DTFE…ERRA). Basic and acidic residues predominate over residues 241-250 (RPSEGGDARP). Basic residues predominate over residues 257–266 (SRARSVHGRR). The span at 353 to 369 (DTFEDNRRDELRHDDSR) shows a compositional bias: basic and acidic residues. Residues 395 to 404 (PHLRRSRGRG) show a composition bias toward basic residues.

This sequence belongs to the herpesviridae US2 family.

The polypeptide is Gene 68 protein (Equine herpesvirus 1 (strain Ab4p) (EHV-1)).